A 797-amino-acid polypeptide reads, in one-letter code: Ent-atiserene synthase KSL1, chloroplastic (797 aa).

A chloroplast-targeting transit peptide spans 1-48 (LVKDDMSLILSSFSLFRSSRSSPASASLAGSGHPRTTPPKIASLQSPM). Residues 21–32 (SSPASASLAGSG) show a composition bias toward low complexity. Residues 21 to 47 (SSPASASLAGSGHPRTTPPKIASLQSP) are disordered. The Mg(2+) site is built by D547, D551, N691, and E699. The short motif at 547-551 (DDLFD) is the DDXXD motif element.

The protein belongs to the terpene synthase family. It depends on Mg(2+) as a cofactor.

The protein localises to the plastid. Its subcellular location is the chloroplast. It carries out the reaction ent-copalyl diphosphate = ent-atiserene + diphosphate. It functions in the pathway secondary metabolite biosynthesis; terpenoid biosynthesis. Functionally, involved in the biosynthesis of ent-kaurene diterpenoids natural products such as oridonin, miltiradiene, eriocalyxin B and nezukol, known to exhibit antitumor, anti-inflammatory and antibacterial activities. Catalyzes the conversion of ent-copalyl diphosphate (ent-CPP) to ent-atiserene. The polypeptide is Ent-atiserene synthase KSL1, chloroplastic (Isodon japonicus (Scutellaria japonica)).